A 915-amino-acid polypeptide reads, in one-letter code: Translation initiation factor IF-2 (915 aa).

Basic and acidic residues predominate over residues 83–94; it reads QSRRAVEKEQIL. 3 disordered regions span residues 83–177, 216–280, and 293–328; these read QSRR…PEPP, EADR…KPAV, and ISGM…LLRE. 2 stretches are compositionally biased toward low complexity: residues 111–129 and 137–164; these read VRAA…EAPS and APAT…LSAP. The segment covering 165 to 177 has biased composition (pro residues); it reads LPEPVPEPVPEPP. The span at 293–305 shows a compositional bias: polar residues; sequence ISGMDDSSGTGSR. The segment covering 314–328 has biased composition (basic and acidic residues); that stretch reads MEREREQEEADLLRE. Positions 412–582 constitute a tr-type G domain; the sequence is TRPPVVTIMG…LTEAEMRELK (171 aa). The segment at 421–428 is G1; it reads GHVDHGKT. 421 to 428 serves as a coordination point for GTP; the sequence is GHVDHGKT. Residues 446-450 are G2; that stretch reads GITQH. The segment at 468 to 471 is G3; it reads DTPG. GTP contacts are provided by residues 468–472 and 522–525; these read DTPGH and NKMD. The G4 stretch occupies residues 522-525; sequence NKMD. The segment at 558–560 is G5; that stretch reads SAK.

The protein belongs to the TRAFAC class translation factor GTPase superfamily. Classic translation factor GTPase family. IF-2 subfamily.

Its subcellular location is the cytoplasm. In terms of biological role, one of the essential components for the initiation of protein synthesis. Protects formylmethionyl-tRNA from spontaneous hydrolysis and promotes its binding to the 30S ribosomal subunits. Also involved in the hydrolysis of GTP during the formation of the 70S ribosomal complex. This Chlorobium luteolum (strain DSM 273 / BCRC 81028 / 2530) (Pelodictyon luteolum) protein is Translation initiation factor IF-2.